Consider the following 168-residue polypeptide: uncharacterized protein (168 aa).

2 helical membrane passes run 27-47 (NWLV…RISG) and 147-167 (IENG…QVMF).

The protein resides in the membrane. This is an uncharacterized protein from Saccharomyces cerevisiae (strain ATCC 204508 / S288c) (Baker's yeast).